We begin with the raw amino-acid sequence, 39 residues long: Potassium channel toxin alpha-KTx 2.9 (39 aa).

3 disulfides stabilise this stretch: Cys7–Cys29, Cys13–Cys34, and Cys17–Cys36. The residue at position 39 (Asn39) is an Asparagine amide.

The protein belongs to the short scorpion toxin superfamily. Potassium channel inhibitor family. Alpha-KTx 02 subfamily. In terms of tissue distribution, expressed by the venom gland.

The protein localises to the secreted. In terms of biological role, blocks Kv1.3/KCNA3 voltage-gated potassium channels of human T-lymphocytes (Kd=0.25 nM). The polypeptide is Potassium channel toxin alpha-KTx 2.9 (Centruroides elegans (Bark scorpion)).